The chain runs to 95 residues: Hge-scorpine (95 aa).

Residues 1–19 (MNTKLTVLCFLGIVTIVSC) form the signal peptide. The 40-residue stretch at 55-94 (QFGCFANVDVKGDCKRHCKAEDKEGICHGTKCKCGVPISY) folds into the BetaSPN-type CS-alpha/beta domain. 3 disulfide bridges follow: cysteine 58/cysteine 81, cysteine 68/cysteine 86, and cysteine 72/cysteine 88.

Belongs to the long chain scorpion toxin family. Class 3 subfamily. In terms of tissue distribution, expressed by the venom gland.

The protein localises to the secreted. In terms of biological role, has antibacterial activity against B.subtilis, but not against S.aureus. Also has hemolytic and cytolytic activities. Since cell lysis occurs at the tested concentrations, observation of activity on potassium channels is impossible. Blocks Kv1.1/KCNA1 (IC(50)=185 nM) potassium channels. Shows a weak hemolytic activity. This is Hge-scorpine from Hoffmannihadrurus gertschi (Scorpion).